The chain runs to 148 residues: Ribosome maturation factor RimP (148 aa).

It belongs to the RimP family.

The protein localises to the cytoplasm. Functionally, required for maturation of 30S ribosomal subunits. The sequence is that of Ribosome maturation factor RimP from Treponema denticola (strain ATCC 35405 / DSM 14222 / CIP 103919 / JCM 8153 / KCTC 15104).